The following is a 228-amino-acid chain: 3,4-dihydroxy-2-butanone 4-phosphate synthase (228 aa).

D-ribulose 5-phosphate-binding positions include 37–38 (RE), aspartate 42, 150–154 (RRGHT), and glutamate 174. Glutamate 38 contacts Mg(2+). Histidine 153 is a Mg(2+) binding site.

Belongs to the DHBP synthase family. Homodimer. It depends on Mg(2+) as a cofactor. Mn(2+) serves as cofactor.

It catalyses the reaction D-ribulose 5-phosphate = (2S)-2-hydroxy-3-oxobutyl phosphate + formate + H(+). Its pathway is cofactor biosynthesis; riboflavin biosynthesis; 2-hydroxy-3-oxobutyl phosphate from D-ribulose 5-phosphate: step 1/1. Catalyzes the conversion of D-ribulose 5-phosphate to formate and 3,4-dihydroxy-2-butanone 4-phosphate. This chain is 3,4-dihydroxy-2-butanone 4-phosphate synthase, found in Photobacterium profundum (strain SS9).